The primary structure comprises 938 residues: Cyclin-dependent kinase-like 5 (938 aa).

One can recognise a Protein kinase domain in the interval 13-297 (FEILGVVGEG…TEQCLNHPTF (285 aa)). ATP-binding positions include 19 to 27 (VGEGAYGVV) and Lys-42. Catalysis depends on Asp-135, which acts as the Proton acceptor. Disordered regions lie at residues 298-348 (QTQR…DIQN), 382-566 (KTYQ…RHSK), 646-865 (SPQP…LTAQ), and 877-938 (HPLS…KWKQ). Composition is skewed to polar residues over residues 319–331 (ESST…QSTK) and 382–402 (KTYQ…NNNI). Position 407 is a phosphoserine (Ser-407). Residues 407 to 417 (SPKEAKSKTEF) are compositionally biased toward basic and acidic residues. 3 stretches are compositionally biased toward polar residues: residues 434–462 (LKSS…QPSE), 473–482 (IPQSSRSPSY), and 494–548 (DSKS…SGRN). A Phosphoserine modification is found at Ser-479. 2 stretches are compositionally biased toward basic and acidic residues: residues 549–559 (NRNEGTLDSRR) and 679–704 (QKSE…RHLY). Position 720 is a phosphoserine (Ser-720). Over residues 728–748 (HENNVSTRVSSLPSDSSSGTN) the composition is skewed to polar residues. A Phosphoserine modification is found at Ser-761. Basic and acidic residues-rich tracts occupy residues 769–778 (DQLKEKEKQG) and 817–827 (RPKEWRPEKLS). A compositionally biased stretch (polar residues) spans 880–891 (SQATGGSSNIRQ).

The protein belongs to the protein kinase superfamily. CMGC Ser/Thr protein kinase family. CDC2/CDKX subfamily. In terms of assembly, interacts with MECP2. Post-translationally, autophosphorylated.

The protein localises to the nucleus. Its subcellular location is the cytoplasm. The protein resides in the cytoskeleton. It is found in the cilium basal body. It localises to the microtubule organizing center. The protein localises to the centrosome. The catalysed reaction is L-seryl-[protein] + ATP = O-phospho-L-seryl-[protein] + ADP + H(+). It carries out the reaction L-threonyl-[protein] + ATP = O-phospho-L-threonyl-[protein] + ADP + H(+). Its function is as follows. Mediates phosphorylation of MECP2. May regulate ciliogenesis. In Mus musculus (Mouse), this protein is Cyclin-dependent kinase-like 5.